A 105-amino-acid chain; its full sequence is Large ribosomal subunit protein uL24 (105 aa).

Belongs to the universal ribosomal protein uL24 family. In terms of assembly, part of the 50S ribosomal subunit.

Functionally, one of two assembly initiator proteins, it binds directly to the 5'-end of the 23S rRNA, where it nucleates assembly of the 50S subunit. One of the proteins that surrounds the polypeptide exit tunnel on the outside of the subunit. The protein is Large ribosomal subunit protein uL24 of Staphylococcus haemolyticus (strain JCSC1435).